Consider the following 506-residue polypeptide: GMP synthase [glutamine-hydrolyzing] (506 aa).

The Glutamine amidotransferase type-1 domain maps to 3 to 188 (GFVILDFGSQ…AQGMCKAPAD (186 aa)). Catalysis depends on C80, which acts as the Nucleophile. Active-site residues include H162 and E164. The region spanning 189–381 (WDAPHIKDIL…LGLPKEMLWR (193 aa)) is the GMPS ATP-PPase domain. 217–223 (SGGVDST) is a binding site for ATP.

As to quaternary structure, homodimer.

It catalyses the reaction XMP + L-glutamine + ATP + H2O = GMP + L-glutamate + AMP + diphosphate + 2 H(+). It participates in purine metabolism; GMP biosynthesis; GMP from XMP (L-Gln route): step 1/1. In terms of biological role, catalyzes the synthesis of GMP from XMP. This Bdellovibrio bacteriovorus (strain ATCC 15356 / DSM 50701 / NCIMB 9529 / HD100) protein is GMP synthase [glutamine-hydrolyzing].